The primary structure comprises 139 residues: Acyl carrier protein 5, chloroplastic (139 aa).

A chloroplast-targeting transit peptide spans 1 to 54; it reads MATSFCSSISMQAPFSATTTRFCLNKQATIFNNEKTNNLSFSLRRLMPARLAVS. Residues 59-134 enclose the Carrier domain; sequence QETVEKVSEI…QAAELIEELV (76 aa). The residue at position 94 (S94) is an O-(pantetheine 4'-phosphoryl)serine.

This sequence belongs to the acyl carrier protein (ACP) family. In terms of processing, 4'-phosphopantetheine is transferred from CoA to a specific serine of apo-ACP by acpS. This modification is essential for activity because fatty acids are bound in thioester linkage to the sulfhydryl of the prosthetic group.

It localises to the plastid. It is found in the chloroplast. In terms of biological role, carrier of the growing fatty acid chain in fatty acid biosynthesis. This chain is Acyl carrier protein 5, chloroplastic (ACP5), found in Arabidopsis thaliana (Mouse-ear cress).